A 288-amino-acid polypeptide reads, in one-letter code: 2-hydroxy-6-oxononadienedioate/2-hydroxy-6-oxononatrienedioate hydrolase (288 aa).

His267 serves as the catalytic Proton acceptor.

Belongs to the AB hydrolase superfamily. MhpC family. Homodimer.

It catalyses the reaction (2Z,4E)-2-hydroxy-6-oxonona-2,4-dienedioate + H2O = (2Z)-2-hydroxypenta-2,4-dienoate + succinate + H(+). It carries out the reaction (2Z,4E,7E)-2-hydroxy-6-oxonona-2,4,7-trienedioate + H2O = (2Z)-2-hydroxypenta-2,4-dienoate + fumarate + H(+). It functions in the pathway aromatic compound metabolism; 3-phenylpropanoate degradation. Its function is as follows. Catalyzes the cleavage of the C5-C6 bond of 2-hydroxy-6-oxononadienedioate and 2-hydroxy-6-oxononatrienedioate, a dienol ring fission product of the bacterial meta-cleavage pathway for degradation of phenylpropionic acid. This chain is 2-hydroxy-6-oxononadienedioate/2-hydroxy-6-oxononatrienedioate hydrolase, found in Klebsiella pneumoniae subsp. pneumoniae (strain ATCC 700721 / MGH 78578).